We begin with the raw amino-acid sequence, 206 residues long: Ribonuclease HII (206 aa).

The 193-residue stretch at 14–206 (EFICGIDEVG…FKLRQLGEKV (193 aa)) folds into the RNase H type-2 domain. 3 residues coordinate a divalent metal cation: aspartate 20, glutamate 21, and aspartate 117.

This sequence belongs to the RNase HII family. Mn(2+) serves as cofactor. Mg(2+) is required as a cofactor.

The protein localises to the cytoplasm. The catalysed reaction is Endonucleolytic cleavage to 5'-phosphomonoester.. Functionally, endonuclease that specifically degrades the RNA of RNA-DNA hybrids. In Chlorobium chlorochromatii (strain CaD3), this protein is Ribonuclease HII.